A 469-amino-acid chain; its full sequence is 3-isopropylmalate dehydratase large subunit (469 aa).

Positions 350, 410, and 413 each coordinate [4Fe-4S] cluster.

It belongs to the aconitase/IPM isomerase family. LeuC type 1 subfamily. In terms of assembly, heterodimer of LeuC and LeuD. [4Fe-4S] cluster is required as a cofactor.

The catalysed reaction is (2R,3S)-3-isopropylmalate = (2S)-2-isopropylmalate. Its pathway is amino-acid biosynthesis; L-leucine biosynthesis; L-leucine from 3-methyl-2-oxobutanoate: step 2/4. Catalyzes the isomerization between 2-isopropylmalate and 3-isopropylmalate, via the formation of 2-isopropylmaleate. The sequence is that of 3-isopropylmalate dehydratase large subunit from Allorhizobium ampelinum (strain ATCC BAA-846 / DSM 112012 / S4) (Agrobacterium vitis (strain S4)).